Consider the following 657-residue polypeptide: Transketolase (657 aa).

Position 31 (histidine 31) interacts with substrate. Thiamine diphosphate-binding positions include histidine 71 and 120-122; that span reads GPL. Aspartate 158 serves as a coordination point for Mg(2+). 2 residues coordinate thiamine diphosphate: glycine 159 and asparagine 188. Mg(2+)-binding residues include asparagine 188 and isoleucine 190. Histidine 262, arginine 354, and serine 381 together coordinate substrate. Histidine 262 is a binding site for thiamine diphosphate. Glutamate 408 (proton donor) is an active-site residue. Residue phenylalanine 434 participates in thiamine diphosphate binding. Substrate contacts are provided by histidine 458, aspartate 466, and arginine 517.

Belongs to the transketolase family. In terms of assembly, homodimer. Requires Mg(2+) as cofactor. It depends on Ca(2+) as a cofactor. Mn(2+) serves as cofactor. Co(2+) is required as a cofactor. The cofactor is thiamine diphosphate.

It carries out the reaction D-sedoheptulose 7-phosphate + D-glyceraldehyde 3-phosphate = aldehydo-D-ribose 5-phosphate + D-xylulose 5-phosphate. It functions in the pathway carbohydrate biosynthesis; Calvin cycle. It participates in carbohydrate degradation; pentose phosphate pathway. Functionally, catalyzes the transfer of a two-carbon ketol group from a ketose donor to an aldose acceptor, via a covalent intermediate with the cofactor thiamine pyrophosphate. This is Transketolase (tklB) from Cereibacter sphaeroides (Rhodobacter sphaeroides).